The sequence spans 427 residues: tRNA pseudouridine synthase Pus10 (427 aa).

Asp240 (nucleophile) is an active-site residue. Positions 306 and 378 each coordinate substrate.

Belongs to the pseudouridine synthase Pus10 family.

It carries out the reaction uridine(54) in tRNA = pseudouridine(54) in tRNA. It catalyses the reaction uridine(55) in tRNA = pseudouridine(55) in tRNA. In terms of biological role, responsible for synthesis of pseudouridine from uracil-54 and uracil-55 in the psi GC loop of transfer RNAs. This chain is tRNA pseudouridine synthase Pus10, found in Halorubrum lacusprofundi (strain ATCC 49239 / DSM 5036 / JCM 8891 / ACAM 34).